An 842-amino-acid polypeptide reads, in one-letter code: Circularly permutated Ras protein 1 (842 aa).

GTP contacts are provided by residues 62–66, 121–124, and 181–188; these read DTAGQ, NKVD, and GGGGVGKS. The segment at 253-274 is disordered; that stretch reads SGKDKQPSPQQAASPSTIDRTG. Positions 259 to 274 are enriched in polar residues; the sequence is PSPQQAASPSTIDRTG. One can recognise a VWFA domain in the interval 377 to 627; sequence IIIYCIDVSG…TQNPMIATDV (251 aa).

This sequence belongs to the small GTPase superfamily. CpRas family.

In Dictyostelium discoideum (Social amoeba), this protein is Circularly permutated Ras protein 1 (cpras1).